Consider the following 446-residue polypeptide: Gasdermin-A (446 aa).

The tract at residues 1-252 (MTMFENVTRA…FILIQASDVG (252 aa)) is triggers pyroptosis. Residue 9-13 (RALAR) coordinates a cardiolipin. The next 4 beta stranded transmembrane spans lie at 78 to 95 (NFSF…DVDV), 99 to 120 (VKVK…TLSV), 164 to 180 (VTLE…SLPF), and 184 to 198 (LGLQ…AVTI).

This sequence belongs to the gasdermin family. In terms of assembly, homooligomer; homooligomeric ring-shaped pore complex containing 18-36 subunits when inserted in the membrane. Cleavage by bacterial SpeB relieves autoinhibition by releasing the N-terminal moiety (Gasdermin-A, N-terminal) that initiates pyroptosis. Post-translationally, palmitoylated. As to expression, expressed predominantly in the gastrointestinal (GI) tract and in the skin at a lower level. In the GI tract, the expression is highly restricted to the esophagus and forestomach.

It is found in the cytoplasm. The protein resides in the perinuclear region. Its subcellular location is the cytosol. It localises to the cell membrane. With respect to regulation, the full-length protein before cleavage is inactive: intramolecular interactions between N- and C-terminal domains mediate autoinhibition in the absence of activation signal. The intrinsic pyroptosis-inducing activity is carried by the released N-terminal moiety (Gasdermin-A, N-terminal) following cleavage by bacterial effector protein SpeB. In terms of biological role, this form constitutes the precursor of the pore-forming protein and acts as a sensor of bacterial infection: upon infection, specifically cleaved by bacterial effector protein SpeB in epithelial cells, releasing the N-terminal moiety (Gasdermin-A, N-terminal) that binds to membranes and forms pores, triggering pyroptosis. Its function is as follows. Pore-forming protein that causes membrane permeabilization and pyroptosis. Released upon cleavage by bacterial effector protein SpeB, and binds to membrane inner leaflet lipids. Homooligomerizes within the membrane and forms pores of 10-15 nanometers (nm) of inner diameter, triggering pyroptosis. Pyroptosis triggers the elimination of the infected skin cell, depriving the pathogen of its protective niche, while inducing an inflammatory response. This ultimately prevents bacterial penetration of the epithelial barrier and a subsequent systemic dissemination of the pathogen. Binds to cardiolipin and other acidic phospholipids, such as phosphatidylserine, which mediate its targeting to the inner leaflet membrane. The polypeptide is Gasdermin-A (Gsdma) (Mus musculus (Mouse)).